A 217-amino-acid chain; its full sequence is Transmembrane emp24 domain-containing protein p24delta6 (217 aa).

Positions 1-26 (MAISPVLFIGLIYLAGGGSLFPGVEA) are cleaved as a signal peptide. Over 27-186 (IWLTVPESGE…INEKTNTRVN (160 aa)) the chain is Lumenal. Residues 36-152 (ERCVYEEIQA…IEGVELEIRR (117 aa)) enclose the GOLD domain. N-linked (GlcNAc...) asparagine glycans are attached at residues Asn84 and Asn116. A coiled-coil region spans residues 138–160 (AKKEKIEGVELEIRRSTEYASAI). Omega-N-methylated arginine occurs at positions 170 and 175. Residues 187 to 207 (QLGLMSLGVAIVVSISQVLYL) form a helical membrane-spanning segment. Residues 208 to 217 (KRYFLKKKLI) are Cytoplasmic-facing. Positions 210 to 211 (YF) match the COPII vesicle coat-binding motif. A COPI vesicle coat-binding motif is present at residues 210–217 (YFLKKKLI).

Belongs to the EMP24/GP25L family. As to quaternary structure, probably oligomerizes with other members of the EMP24/GP25L family. Associates with the COPI vesicle coat (coatomer). Associates with the COPII vesicle coat (coatomer).

The protein localises to the endoplasmic reticulum membrane. Involved in vesicular protein trafficking. Mainly functions in the early secretory pathway. Thought to act as cargo receptor at the lumenal side for incorporation of secretory cargo molecules into transport vesicles and to be involved in vesicle coat formation at the cytoplasmic side. This chain is Transmembrane emp24 domain-containing protein p24delta6, found in Arabidopsis thaliana (Mouse-ear cress).